A 334-amino-acid polypeptide reads, in one-letter code: N-acetyl-gamma-glutamyl-phosphate reductase (334 aa).

Residue cysteine 154 is part of the active site.

It belongs to the NAGSA dehydrogenase family. Type 1 subfamily.

It is found in the cytoplasm. The catalysed reaction is N-acetyl-L-glutamate 5-semialdehyde + phosphate + NADP(+) = N-acetyl-L-glutamyl 5-phosphate + NADPH + H(+). Its pathway is amino-acid biosynthesis; L-arginine biosynthesis; N(2)-acetyl-L-ornithine from L-glutamate: step 3/4. Functionally, catalyzes the NADPH-dependent reduction of N-acetyl-5-glutamyl phosphate to yield N-acetyl-L-glutamate 5-semialdehyde. The polypeptide is N-acetyl-gamma-glutamyl-phosphate reductase (Buchnera aphidicola subsp. Acyrthosiphon pisum (strain Tuc7)).